We begin with the raw amino-acid sequence, 515 residues long: 1-pyrroline-5-carboxylate dehydrogenase (515 aa).

Residues Glu286 and Cys320 contribute to the active site.

The protein belongs to the aldehyde dehydrogenase family. RocA subfamily.

The enzyme catalyses L-glutamate 5-semialdehyde + NAD(+) + H2O = L-glutamate + NADH + 2 H(+). It participates in amino-acid degradation; L-proline degradation into L-glutamate; L-glutamate from L-proline: step 2/2. This chain is 1-pyrroline-5-carboxylate dehydrogenase, found in Bacillus pumilus (strain SAFR-032).